The sequence spans 288 residues: 2-hydroxy-6-oxononadienedioate/2-hydroxy-6-oxononatrienedioate hydrolase (288 aa).

Residues 38–274 (ALVLLHGSGP…RCGHWAQWEH (237 aa)) enclose the AB hydrolase-1 domain. The active-site Proton acceptor is the H268.

Belongs to the AB hydrolase superfamily. MhpC family. In terms of assembly, homodimer.

The catalysed reaction is (2Z,4E)-2-hydroxy-6-oxonona-2,4-dienedioate + H2O = (2Z)-2-hydroxypenta-2,4-dienoate + succinate + H(+). It carries out the reaction (2Z,4E,7E)-2-hydroxy-6-oxonona-2,4,7-trienedioate + H2O = (2Z)-2-hydroxypenta-2,4-dienoate + fumarate + H(+). It participates in aromatic compound metabolism; 3-phenylpropanoate degradation. Catalyzes the cleavage of the C5-C6 bond of 2-hydroxy-6-oxononadienedioate and 2-hydroxy-6-oxononatrienedioate, a dienol ring fission product of the bacterial meta-cleavage pathway for degradation of phenylpropionic acid. The sequence is that of 2-hydroxy-6-oxononadienedioate/2-hydroxy-6-oxononatrienedioate hydrolase from Burkholderia vietnamiensis (strain G4 / LMG 22486) (Burkholderia cepacia (strain R1808)).